Reading from the N-terminus, the 558-residue chain is SPATS2-like protein (558 aa).

N-acetylalanine is present on alanine 2. The segment covering 63 to 79 (GKKKNNKRKRSKSKQHQ) has biased composition (basic residues). 2 disordered regions span residues 63–148 (GKKK…RGIT) and 161–202 (DGNP…SNAP). Composition is skewed to basic and acidic residues over residues 80–92 (GNKD…ERPE) and 110–142 (GCEK…EPPR). The residue at position 120 (serine 120) is a Phosphoserine. A coiled-coil region spans residues 279–344 (KEEAMDILTA…ARFSCDIEQL (66 aa)). The disordered stretch occupies residues 383 to 514 (KQGNFSRKSS…SEKARRRQHA (132 aa)). Polar residues predominate over residues 416 to 433 (DACQQTMPTNKQQNGPSN). A Phosphoserine modification is found at serine 455. The span at 469-485 (HEHRRQPHNGFRPKNKG) shows a compositional bias: basic residues.

Belongs to the SPATS2 family.

The protein resides in the cytoplasm. It localises to the nucleus. The protein localises to the nucleolus. This Rattus norvegicus (Rat) protein is SPATS2-like protein (Spats2l).